A 145-amino-acid chain; its full sequence is Large ribosomal subunit protein uL11 (145 aa).

The protein belongs to the universal ribosomal protein uL11 family. In terms of assembly, part of the ribosomal stalk of the 50S ribosomal subunit. Interacts with L10 and the large rRNA to form the base of the stalk. L10 forms an elongated spine to which L12 dimers bind in a sequential fashion forming a multimeric L10(L12)X complex. In terms of processing, one or more lysine residues are methylated.

Its function is as follows. Forms part of the ribosomal stalk which helps the ribosome interact with GTP-bound translation factors. In Coxiella burnetii (strain CbuK_Q154) (Coxiella burnetii (strain Q154)), this protein is Large ribosomal subunit protein uL11.